Consider the following 294-residue polypeptide: NAD kinase (294 aa).

Asp-73 acts as the Proton acceptor in catalysis. Residues Asp-73–Gly-74, Asn-147–Asp-148, Arg-175, Asp-177, and Thr-188–Ser-193 contribute to the NAD(+) site.

It belongs to the NAD kinase family. A divalent metal cation serves as cofactor.

Its subcellular location is the cytoplasm. The catalysed reaction is NAD(+) + ATP = ADP + NADP(+) + H(+). Functionally, involved in the regulation of the intracellular balance of NAD and NADP, and is a key enzyme in the biosynthesis of NADP. Catalyzes specifically the phosphorylation on 2'-hydroxyl of the adenosine moiety of NAD to yield NADP. This Nitrosospira multiformis (strain ATCC 25196 / NCIMB 11849 / C 71) protein is NAD kinase.